The following is a 502-amino-acid chain: Probable cytosol aminopeptidase (502 aa).

Residues Lys-269 and Asp-274 each contribute to the Mn(2+) site. Residue Lys-281 is part of the active site. Mn(2+) is bound by residues Asp-292, Asp-351, and Glu-353. The active site involves Arg-355.

This sequence belongs to the peptidase M17 family. Mn(2+) is required as a cofactor.

The protein localises to the cytoplasm. It catalyses the reaction Release of an N-terminal amino acid, Xaa-|-Yaa-, in which Xaa is preferably Leu, but may be other amino acids including Pro although not Arg or Lys, and Yaa may be Pro. Amino acid amides and methyl esters are also readily hydrolyzed, but rates on arylamides are exceedingly low.. The catalysed reaction is Release of an N-terminal amino acid, preferentially leucine, but not glutamic or aspartic acids.. Presumably involved in the processing and regular turnover of intracellular proteins. Catalyzes the removal of unsubstituted N-terminal amino acids from various peptides. This chain is Probable cytosol aminopeptidase, found in Vibrio campbellii (strain ATCC BAA-1116).